Here is a 413-residue protein sequence, read N- to C-terminus: Coiled-coil domain-containing protein 83 (413 aa).

The tract at residues 1–21 is disordered; the sequence is MENSGKANKKDTHDGPPKEIK. The span at 8–21 shows a compositional bias: basic and acidic residues; that stretch reads NKKDTHDGPPKEIK. 2 coiled-coil regions span residues 37 to 184 and 216 to 256; these read EDAV…RKKI and WEND…LSNC.

In Homo sapiens (Human), this protein is Coiled-coil domain-containing protein 83 (CCDC83).